Consider the following 496-residue polypeptide: UDP-N-acetylmuramoyl-L-alanyl-D-glutamate--2,6-diaminopimelate ligase (496 aa).

Ser32 contributes to the UDP-N-acetyl-alpha-D-muramoyl-L-alanyl-D-glutamate binding site. 116–122 (GTNGKTT) contributes to the ATP binding site. Residues 158-159 (TT), Ser185, Gln191, and Arg193 contribute to the UDP-N-acetyl-alpha-D-muramoyl-L-alanyl-D-glutamate site. An N6-carboxylysine modification is found at Lys225. Meso-2,6-diaminopimelate-binding positions include Arg389, 413-416 (DNPR), Gly464, and Glu468. Residues 413 to 416 (DNPR) carry the Meso-diaminopimelate recognition motif motif.

The protein belongs to the MurCDEF family. MurE subfamily. Requires Mg(2+) as cofactor. Carboxylation is probably crucial for Mg(2+) binding and, consequently, for the gamma-phosphate positioning of ATP.

The protein resides in the cytoplasm. It carries out the reaction UDP-N-acetyl-alpha-D-muramoyl-L-alanyl-D-glutamate + meso-2,6-diaminopimelate + ATP = UDP-N-acetyl-alpha-D-muramoyl-L-alanyl-gamma-D-glutamyl-meso-2,6-diaminopimelate + ADP + phosphate + H(+). It participates in cell wall biogenesis; peptidoglycan biosynthesis. Catalyzes the addition of meso-diaminopimelic acid to the nucleotide precursor UDP-N-acetylmuramoyl-L-alanyl-D-glutamate (UMAG) in the biosynthesis of bacterial cell-wall peptidoglycan. The protein is UDP-N-acetylmuramoyl-L-alanyl-D-glutamate--2,6-diaminopimelate ligase of Trichormus variabilis (strain ATCC 29413 / PCC 7937) (Anabaena variabilis).